A 570-amino-acid polypeptide reads, in one-letter code: Proline--tRNA ligase (570 aa).

It belongs to the class-II aminoacyl-tRNA synthetase family. ProS type 1 subfamily. Homodimer.

Its subcellular location is the cytoplasm. It carries out the reaction tRNA(Pro) + L-proline + ATP = L-prolyl-tRNA(Pro) + AMP + diphosphate. Its function is as follows. Catalyzes the attachment of proline to tRNA(Pro) in a two-step reaction: proline is first activated by ATP to form Pro-AMP and then transferred to the acceptor end of tRNA(Pro). As ProRS can inadvertently accommodate and process non-cognate amino acids such as alanine and cysteine, to avoid such errors it has two additional distinct editing activities against alanine. One activity is designated as 'pretransfer' editing and involves the tRNA(Pro)-independent hydrolysis of activated Ala-AMP. The other activity is designated 'posttransfer' editing and involves deacylation of mischarged Ala-tRNA(Pro). The misacylated Cys-tRNA(Pro) is not edited by ProRS. The sequence is that of Proline--tRNA ligase from Clostridium tetani (strain Massachusetts / E88).